A 442-amino-acid polypeptide reads, in one-letter code: tRNA modification GTPase MnmE (442 aa).

Arg27, Glu84, and Lys124 together coordinate (6S)-5-formyl-5,6,7,8-tetrahydrofolate. Residues 221 to 366 (GLHVVIVGAP…LLDALQAFAE (146 aa)) form the TrmE-type G domain. GTP contacts are provided by residues 231-236 (NAGKSS), 250-256 (SEEAGTT), and 275-278 (DTAG). The Mg(2+) site is built by Ser235 and Thr256. Position 442 (Lys442) interacts with (6S)-5-formyl-5,6,7,8-tetrahydrofolate.

It belongs to the TRAFAC class TrmE-Era-EngA-EngB-Septin-like GTPase superfamily. TrmE GTPase family. Homodimer. Heterotetramer of two MnmE and two MnmG subunits. The cofactor is K(+).

The protein localises to the cytoplasm. Its function is as follows. Exhibits a very high intrinsic GTPase hydrolysis rate. Involved in the addition of a carboxymethylaminomethyl (cmnm) group at the wobble position (U34) of certain tRNAs, forming tRNA-cmnm(5)s(2)U34. This chain is tRNA modification GTPase MnmE, found in Brucella ovis (strain ATCC 25840 / 63/290 / NCTC 10512).